Consider the following 137-residue polypeptide: Large ribosomal subunit protein bL17 (137 aa).

It belongs to the bacterial ribosomal protein bL17 family. In terms of assembly, part of the 50S ribosomal subunit. Contacts protein L32.

This Bradyrhizobium sp. (strain ORS 278) protein is Large ribosomal subunit protein bL17.